Reading from the N-terminus, the 528-residue chain is Probable protein phosphatase 2C 51 (528 aa).

The chain crosses the membrane as a helical span at residues 8–28 (SLLNLGLLIIFFVFFFLVINC). The 375-residue stretch at 71–445 (RCHTAAIQGR…DNMAAVVVPL (375 aa)) folds into the PPM-type phosphatase domain. 4 residues coordinate Mn(2+): Asp117, Gly118, Asp385, and Asp436.

The protein belongs to the PP2C family. Mg(2+) is required as a cofactor. Requires Mn(2+) as cofactor.

The protein resides in the membrane. The enzyme catalyses O-phospho-L-seryl-[protein] + H2O = L-seryl-[protein] + phosphate. It catalyses the reaction O-phospho-L-threonyl-[protein] + H2O = L-threonyl-[protein] + phosphate. The chain is Probable protein phosphatase 2C 51 from Arabidopsis thaliana (Mouse-ear cress).